Consider the following 509-residue polypeptide: ATP synthase subunit alpha (509 aa).

Residue 169–176 (GDRQTGKT) participates in ATP binding.

Belongs to the ATPase alpha/beta chains family. F-type ATPases have 2 components, CF(1) - the catalytic core - and CF(0) - the membrane proton channel. CF(1) has five subunits: alpha(3), beta(3), gamma(1), delta(1), epsilon(1). CF(0) has three main subunits: a(1), b(2) and c(9-12). The alpha and beta chains form an alternating ring which encloses part of the gamma chain. CF(1) is attached to CF(0) by a central stalk formed by the gamma and epsilon chains, while a peripheral stalk is formed by the delta and b chains.

The protein resides in the cell inner membrane. The enzyme catalyses ATP + H2O + 4 H(+)(in) = ADP + phosphate + 5 H(+)(out). In terms of biological role, produces ATP from ADP in the presence of a proton gradient across the membrane. The alpha chain is a regulatory subunit. The sequence is that of ATP synthase subunit alpha from Chelativorans sp. (strain BNC1).